We begin with the raw amino-acid sequence, 207 residues long: Tetrathionate reductase subunit B (207 aa).

The signal sequence occupies residues M1–M28. 4Fe-4S ferredoxin-type domains are found at residues Y34 to Y63, G75 to E106, and G107 to V136. [4Fe-4S] cluster is bound by residues C43, C46, C49, C53, C84, C87, C92, C96, C116, C119, C122, C126, C143, C146, C157, and C161.

Probably composed of three subunits: TtrA, TtrB and TtrC.

The protein localises to the cell membrane. Functionally, part of a membrane-bound tetrathionate reductase that catalyzes the reduction of tetrathionate to thiosulfate. TtrB is probably involved in transfer of electrons from TtrC to TtrA. The chain is Tetrathionate reductase subunit B (ttrB) from Archaeoglobus fulgidus (strain ATCC 49558 / DSM 4304 / JCM 9628 / NBRC 100126 / VC-16).